The chain runs to 366 residues: N-acetyl-6-hydroxytryptophan oxidase ivoB (366 aa).

The N-terminal stretch at 1–18 (MHLLSSLAALAAAITVAF) is a signal peptide. N-linked (GlcNAc...) asparagine glycosylation is found at N28 and N81. Positions 87 and 96 each coordinate Cu cation. Residues N114 and N121 are each glycosylated (N-linked (GlcNAc...) asparagine). Cu cation is bound at residue H291. The N-linked (GlcNAc...) asparagine glycan is linked to N319.

It belongs to the tyrosinase family. Cu(2+) serves as cofactor.

The protein operates within pigment biosynthesis. With respect to regulation, activity is inhibited by 2,3-dihydroxynaphthalene, phenylhydrazine, diethyl dithiocarbamate and 8-hydroxyquinolene. Nonribosomal peptide synthetase; part of the pathway that mediates the biosynthesis of the gray-brown conidiophore pigment. The first step of the pathway is performed by the nonribosomal peptide synthetase ivoA that catalyzes ATP-dependent unidirectional stereoinversion of L-tryptophan to D-tryptophan with complete conversion. While the stereoinversion is catalyzed by the epimerization (E) domain of ivoA, the terminal condensation (C) domain stereoselectively hydrolyzes D-tryptophanyl-S-phosphopantetheine thioester and thus represents a non-canonical C domain function. D-tryptophan is acetylated, probably by an endogenous acetyltransferase. N-acetyltryptophan is further 6-hydroxylated into N-acetyl-6-hydroxytryptophan (AHT) by the cytochrome P450 monooxygenase ivoC. N-acetyl-6-hydroxytryptophan is substrate of the N-acetyl-6-hydroxytryptophan oxidase ivoB to produce the gray-brown conidiophore pigment. The sequence is that of N-acetyl-6-hydroxytryptophan oxidase ivoB from Emericella nidulans (strain FGSC A4 / ATCC 38163 / CBS 112.46 / NRRL 194 / M139) (Aspergillus nidulans).